Consider the following 587-residue polypeptide: 5-aminolevulinate synthase, erythroid-specific, mitochondrial (587 aa).

The transit peptide at 1 to 49 directs the protein to the mitochondrion; that stretch reads MVTAAMLLQCCPVPARGPTSLLGKVVKTHQFLFGIGRCPILATQGPNCS. Position 163 (Arg-163) interacts with succinyl-CoA. The pyridoxal 5'-phosphate site is built by Cys-258 and Phe-259. The succinyl-CoA site is built by Ser-280 and Lys-299. Residues Ser-332, His-360, and Thr-388 each coordinate pyridoxal 5'-phosphate. Residue Lys-391 is part of the active site. Lys-391 carries the post-translational modification N6-(pyridoxal phosphate)lysine. Pyridoxal 5'-phosphate-binding residues include Thr-420 and Thr-421. Residue Thr-508 coordinates succinyl-CoA.

Belongs to the class-II pyridoxal-phosphate-dependent aminotransferase family. Homodimer. Interacts with SUCLA2. Pyridoxal 5'-phosphate serves as cofactor.

Its subcellular location is the mitochondrion inner membrane. It carries out the reaction succinyl-CoA + glycine + H(+) = 5-aminolevulinate + CO2 + CoA. It participates in porphyrin-containing compound metabolism; protoporphyrin-IX biosynthesis; 5-aminolevulinate from glycine: step 1/1. In terms of biological role, catalyzes the pyridoxal 5'-phosphate (PLP)-dependent condensation of succinyl-CoA and glycine to form aminolevulinic acid (ALA), with CoA and CO2 as by-products. Contributes significantly to heme formation during erythropoiesis. This chain is 5-aminolevulinate synthase, erythroid-specific, mitochondrial (ALAS2), found in Pongo abelii (Sumatran orangutan).